Here is a 516-residue protein sequence, read N- to C-terminus: RNA-binding region-containing protein 3 (516 aa).

Disordered regions lie at residues 1 to 27 (MAAPEQPLPMSRGCQNSSSLSPPRGDR), 106 to 130 (VHSPCPSLGTEKKKRSDDPVEDDKE), 210 to 254 (EDYM…DEDR), and 264 to 283 (ANLQPKRPKPIKQRHVRKKR). Phosphoserine is present on Ser-21. The 76-residue stretch at 27-102 (RTLLVRHLPA…HTLVVEFAKE (76 aa)) folds into the RRM 1 domain. Ser-108 carries the phosphoserine modification. The segment covering 115 to 130 (TEKKKRSDDPVEDDKE) has biased composition (basic and acidic residues). Positions 217-230 (APLPPTSPQPPEEP) are enriched in pro residues. Positions 269 to 283 (KRPKPIKQRHVRKKR) are enriched in basic residues. One can recognise an RRM 2 domain in the interval 419-502 (CRIYVKNLAK…KPMVVQFARS (84 aa)).

As to quaternary structure, component of the U11/U12 snRNPs that are part of the U12-type spliceosome. Found in a complex with m(7)G-capped U12 snRNA. Interacts with PDCD7.

The protein resides in the nucleus. Functionally, participates in pre-mRNA U12-dependent splicing, performed by the minor spliceosome which removes U12-type introns. U12-type introns comprises less than 1% of all non-coding sequences. Binds to the 3'-stem-loop of m(7)G-capped U12 snRNA. This Bos taurus (Bovine) protein is RNA-binding region-containing protein 3 (RNPC3).